We begin with the raw amino-acid sequence, 544 residues long: Lysophosphatidylcholine acyltransferase 2 (544 aa).

Topologically, residues Met-1–Met-58 are cytoplasmic. A helical; Signal-anchor for type II membrane protein transmembrane segment spans residues Ile-59–Leu-79. At Ala-80–Asp-544 the chain is on the lumenal side. An HXXXXD motif motif is present at residues His-146–Asp-151. Residues Glu-220–Cys-223 carry the EGTC motif motif. EF-hand domains are found at residues Pro-391 to Pro-426 and Asn-428 to Val-463. The Ca(2+) site is built by Asp-404, Asn-406, Asp-408, Ser-410, Glu-415, Asp-441, Asp-443, Asp-445, Tyr-447, and Glu-452. Residues Thr-520 to Ser-530 show a composition bias toward polar residues. The interval Thr-520–Asp-544 is disordered. The segment covering Pro-531–Asp-544 has biased composition (basic and acidic residues).

This sequence belongs to the 1-acyl-sn-glycerol-3-phosphate acyltransferase family.

Its subcellular location is the endoplasmic reticulum membrane. It localises to the golgi apparatus membrane. It is found in the cell membrane. The protein resides in the lipid droplet. The catalysed reaction is a 1-acyl-sn-glycero-3-phosphocholine + an acyl-CoA = a 1,2-diacyl-sn-glycero-3-phosphocholine + CoA. It catalyses the reaction a 1-O-alkyl-sn-glycero-3-phosphocholine + acetyl-CoA = a 1-O-alkyl-2-acetyl-sn-glycero-3-phosphocholine + CoA. It carries out the reaction a 1-acyl-sn-glycero-3-phosphate + an acyl-CoA = a 1,2-diacyl-sn-glycero-3-phosphate + CoA. The enzyme catalyses a 1-O-(1Z-alkenyl)-sn-glycero-3-phosphocholine + an acyl-CoA = a 1-O-(1Z-alkenyl)-2-acyl-sn-glycero-3-phosphocholine + CoA. The catalysed reaction is 1-hexadecanoyl-sn-glycero-3-phosphate + (9Z)-octadecenoyl-CoA = 1-hexadecanoyl-2-(9Z-octadecenoyl)-sn-glycero-3-phosphate + CoA. It catalyses the reaction 1-(9Z-octadecenoyl)-sn-glycero-3-phosphate + (9Z)-octadecenoyl-CoA = 1,2-di-(9Z-octadecenoyl)-sn-glycero-3-phosphate + CoA. It carries out the reaction 1-(9Z-octadecenoyl)-sn-glycero-3-phosphate + hexadecanoyl-CoA = 1-(9Z)-octadecenoyl-2-hexadecanoyl-sn-glycero-3-phosphate + CoA. The enzyme catalyses 1-heptadecanoyl-sn-glycero-3-phosphate + (9Z)-octadecenoyl-CoA = 1-heptadecanoyl-2-(9Z)-octadecenoyl-sn-glycero-3-phosphate + CoA. The catalysed reaction is 1-octadecanoyl-sn-glycero-3-phosphate + (9Z)-octadecenoyl-CoA = 1-octadecanoyl-2-(9Z-octadecenoyl)-sn-glycero-3-phosphate + CoA. It catalyses the reaction heptadecanoyl-CoA + 1-(9Z-octadecenoyl)-sn-glycero-3-phosphate = 1-(9Z)-octadecenoyl-2-heptadecanoyl-sn-glycero-3-phosphate + CoA. It carries out the reaction 1-(9Z-octadecenoyl)-sn-glycero-3-phosphate + (9Z,12Z)-octadecadienoyl-CoA = 1-(9Z)-octadecenoyl-2-(9Z,12Z)-octadecadienoyl-sn-glycero-3-phosphate + CoA. The enzyme catalyses 1-(9Z-octadecenoyl)-sn-glycero-3-phosphate + tetradecanoyl-CoA = 1-(9Z)-octadecenoyl-2-tetradecanoyl-sn-glycero-3-phosphate + CoA. The catalysed reaction is pentadecanoyl-CoA + 1-(9Z-octadecenoyl)-sn-glycero-3-phosphate = 1-(9Z)-octadecenoyl-2-pentadecanoyl-sn-glycero-3-phosphate + CoA. It catalyses the reaction nonadecanoyl-CoA + 1-(9Z-octadecenoyl)-sn-glycero-3-phosphate = 1-(9Z)-octadecenoyl-2-nonadecanoyl-sn-glycero-3-phosphate + CoA. It carries out the reaction 1-hexadecanoyl-sn-glycero-3-phosphocholine + (9Z)-octadecenoyl-CoA = 1-hexadecanoyl-2-(9Z-octadecenoyl)-sn-glycero-3-phosphocholine + CoA. The enzyme catalyses 1-O-hexadecyl-sn-glycero-3-phosphocholine + acetyl-CoA = 1-O-hexadecyl-2-acetyl-sn-glycero-3-phosphocholine + CoA. The catalysed reaction is 1-O-octadecyl-sn-glycero-3-phosphocholine + acetyl-CoA = 1-O-octadecyl-2-acetyl-sn-glycero-3-phosphocholine + CoA. It catalyses the reaction 1-hexadecanoyl-sn-glycero-3-phosphocholine + acetyl-CoA = 1-hexadecanoyl-2-acetyl-sn-glycero-3-phosphocholine + CoA. It carries out the reaction 1-octadecanoyl-sn-glycero-3-phosphocholine + acetyl-CoA = 1-octadecanoyl-2-acetyl-sn-glycero-3-phosphocholine + CoA. The enzyme catalyses a 1-O-(1Z-alkenyl)-sn-glycero-3-phosphocholine + acetyl-CoA = 1-O-(1Z)-alkenyl-2-acetyl-sn-glycero-3-phosphocholine + CoA. The catalysed reaction is 1-O-octadecyl-sn-glycero-3-phosphocholine + (5Z,8Z,11Z,14Z)-eicosatetraenoyl-CoA = 1-O-octadecyl-2-(5Z,8Z,11Z,14Z)-eicosatetraenoyl-sn-glycero-3-phosphocholine + CoA. It participates in lipid metabolism; phospholipid metabolism. Exhibits both acyltransferase and acetyltransferase activities. Activity is calcium-dependent. Catalyzes the conversion of lysophosphatidylcholine (1-acyl-sn-glycero-3-phosphocholine or LPC) into phosphatidylcholine (1,2-diacyl-sn-glycero-3-phosphocholine or PC). Catalyzes the conversion 1-acyl-sn-glycerol-3-phosphate (lysophosphatidic acid or LPA) into 1,2-diacyl-sn-glycerol-3-phosphate (phosphatidic acid or PA) by incorporating an acyl moiety at the sn-2 position of the glycerol backbone. Involved in platelet-activating factor (PAF) biosynthesis by catalyzing the conversion of the PAF precursor, 1-O-alkyl-sn-glycero-3-phosphocholine (lyso-PAF) into 1-O-alkyl-2-acetyl-sn-glycero-3-phosphocholine (PAF). Also converts lyso-PAF to 1-O-alkyl-2-acyl-sn-glycero-3-phosphocholine (PC), a major component of cell membranes and a PAF precursor. Under resting conditions, acyltransferase activity is preferred. Upon acute inflammatory stimulus, acetyltransferase activity is enhanced and PAF synthesis increases. Involved in the regulation of lipid droplet number and size. The sequence is that of Lysophosphatidylcholine acyltransferase 2 (Lpcat2) from Rattus norvegicus (Rat).